The chain runs to 251 residues: Octanoyltransferase (251 aa).

A BPL/LPL catalytic domain is found at 49-230 (DEIADQILVL…DLDDAFAGRL (182 aa)). Residues 87 to 94 (RGGRITWH), 160 to 162 (ALG), and 173 to 175 (GLA) contribute to the substrate site. The active-site Acyl-thioester intermediate is the cysteine 191.

This sequence belongs to the LipB family.

It is found in the cytoplasm. The catalysed reaction is octanoyl-[ACP] + L-lysyl-[protein] = N(6)-octanoyl-L-lysyl-[protein] + holo-[ACP] + H(+). It functions in the pathway protein modification; protein lipoylation via endogenous pathway; protein N(6)-(lipoyl)lysine from octanoyl-[acyl-carrier-protein]: step 1/2. Catalyzes the transfer of endogenously produced octanoic acid from octanoyl-acyl-carrier-protein onto the lipoyl domains of lipoate-dependent enzymes. Lipoyl-ACP can also act as a substrate although octanoyl-ACP is likely to be the physiological substrate. The sequence is that of Octanoyltransferase from Corynebacterium efficiens (strain DSM 44549 / YS-314 / AJ 12310 / JCM 11189 / NBRC 100395).